An 872-amino-acid chain; its full sequence is DNA mismatch repair protein MutS (872 aa).

622–629 (GPNMAGKS) contributes to the ATP binding site.

The protein belongs to the DNA mismatch repair MutS family.

This protein is involved in the repair of mismatches in DNA. It is possible that it carries out the mismatch recognition step. This protein has a weak ATPase activity. This is DNA mismatch repair protein MutS from Geobacter metallireducens (strain ATCC 53774 / DSM 7210 / GS-15).